The following is a 121-amino-acid chain: Basic phospholipase A2 homolog (121 aa).

Cystine bridges form between Cys26/Cys115, Cys28/Cys44, Cys43/Cys95, Cys49/Cys121, Cys50/Cys88, Cys57/Cys81, and Cys75/Cys86.

Belongs to the phospholipase A2 family. Group II subfamily. K49 sub-subfamily. As to quaternary structure, homodimer. As to expression, expressed by the venom gland.

It is found in the secreted. Functionally, snake venom phospholipase A2 homolog that lacks enzymatic activity, but has myotoxic and cytolytic activities. This is Basic phospholipase A2 homolog from Metlapilcoatlus nummifer (Mexican jumping pitviper).